The primary structure comprises 182 residues: Putative manganese efflux pump MntP 2 (182 aa).

6 helical membrane passes run 2–22, 37–57, 63–83, 104–123, 127–149, and 162–182; these read IELT…SIAL, AGGF…YLGV, IGGI…LKMI, LLLL…LTLT, LPLW…GGVH, and AEYL…IEHS.

Belongs to the MntP (TC 9.B.29) family.

Its subcellular location is the cell inner membrane. In terms of biological role, probably functions as a manganese efflux pump. This chain is Putative manganese efflux pump MntP 2, found in Wolinella succinogenes (strain ATCC 29543 / DSM 1740 / CCUG 13145 / JCM 31913 / LMG 7466 / NCTC 11488 / FDC 602W) (Vibrio succinogenes).